A 498-amino-acid polypeptide reads, in one-letter code: Lysine--tRNA ligase (498 aa).

E408 and E415 together coordinate Mg(2+).

Belongs to the class-II aminoacyl-tRNA synthetase family. Homodimer. The cofactor is Mg(2+).

The protein resides in the cytoplasm. It catalyses the reaction tRNA(Lys) + L-lysine + ATP = L-lysyl-tRNA(Lys) + AMP + diphosphate. This chain is Lysine--tRNA ligase, found in Pediococcus pentosaceus (strain ATCC 25745 / CCUG 21536 / LMG 10740 / 183-1w).